The following is a 318-amino-acid chain: Aspartate carbamoyltransferase catalytic subunit (318 aa).

Residues arginine 66 and threonine 67 each contribute to the carbamoyl phosphate site. Lysine 94 lines the L-aspartate pocket. The carbamoyl phosphate site is built by arginine 116, histidine 144, and glutamine 147. L-aspartate-binding residues include arginine 177 and arginine 231. Carbamoyl phosphate is bound by residues glycine 272 and proline 273.

This sequence belongs to the aspartate/ornithine carbamoyltransferase superfamily. ATCase family. As to quaternary structure, heterododecamer (2C3:3R2) of six catalytic PyrB chains organized as two trimers (C3), and six regulatory PyrI chains organized as three dimers (R2).

The catalysed reaction is carbamoyl phosphate + L-aspartate = N-carbamoyl-L-aspartate + phosphate + H(+). Its pathway is pyrimidine metabolism; UMP biosynthesis via de novo pathway; (S)-dihydroorotate from bicarbonate: step 2/3. Functionally, catalyzes the condensation of carbamoyl phosphate and aspartate to form carbamoyl aspartate and inorganic phosphate, the committed step in the de novo pyrimidine nucleotide biosynthesis pathway. This Frankia casuarinae (strain DSM 45818 / CECT 9043 / HFP020203 / CcI3) protein is Aspartate carbamoyltransferase catalytic subunit.